We begin with the raw amino-acid sequence, 236 residues long: Thylakoid lumenal 17.4 kDa protein, chloroplastic (236 aa).

Pentapeptide repeat domains are found at residues 124–163 and 169–208; these read TNLK…SFKG and AVID…VFED.

As to quaternary structure, interacts in vitro with LTO1.

Its subcellular location is the plastid. It is found in the chloroplast thylakoid lumen. In Arabidopsis thaliana (Mouse-ear cress), this protein is Thylakoid lumenal 17.4 kDa protein, chloroplastic.